Reading from the N-terminus, the 159-residue chain is MKVKLICVGKLKERYLKDGISEYQKRLSRFCQFEMIELTDERTPDKASFADNQLIMSKEAQRIHKKIGERDFVIALAIEGKQFPSETFSELISGVTVKGYSTITFIIGGSLGLDSIIKKRANMLMSFGLLTLPHQLMRLVLTEQIYRAFMITQGSPYHK.

S-adenosyl-L-methionine contacts are provided by residues leucine 76, glycine 108, and 127–132 (FGLLTL).

Belongs to the RNA methyltransferase RlmH family. As to quaternary structure, homodimer.

The protein localises to the cytoplasm. It catalyses the reaction pseudouridine(1915) in 23S rRNA + S-adenosyl-L-methionine = N(3)-methylpseudouridine(1915) in 23S rRNA + S-adenosyl-L-homocysteine + H(+). Its function is as follows. Specifically methylates the pseudouridine at position 1915 (m3Psi1915) in 23S rRNA. This is Ribosomal RNA large subunit methyltransferase H from Streptococcus pyogenes serotype M6 (strain ATCC BAA-946 / MGAS10394).